We begin with the raw amino-acid sequence, 2771 residues long: Teneurin-4 (2771 aa).

Basic and acidic residues predominate over residues 1–22 (MDVKERKPYRSLTRRRDAERRY). The tract at residues 1–45 (MDVKERKPYRSLTRRRDAERRYTSSSADSEEGKGPQKSYSSSETL) is disordered. Residues 1-341 (MDVKERKPYR…KPSKYCNWKC (341 aa)) form the Teneurin N-terminal domain. Residues 1–345 (MDVKERKPYR…YCNWKCAALS (345 aa)) lie on the Cytoplasmic side of the membrane. A Phosphoserine modification is found at Ser124. Residues 132 to 233 (WGRSTRSGRS…PPAGSAQEPT (102 aa)) form a disordered region. Residues 134–155 (RSTRSGRSSCLSSRANSNLTLT) are compositionally biased toward low complexity. A compositionally biased stretch (basic and acidic residues) spans 156–166 (DTEHENTETDH). Thr178 is modified (phosphothreonine). Polar residues predominate over residues 191–211 (QHHAASINSLNRGNFTPRSNP). The helical transmembrane segment at 346–366 (AILISATLVILLAYFVAMHLF) threads the bilayer. The Extracellular portion of the chain corresponds to 367-2771 (GLNWHLQPME…FMRQSEMGRR (2405 aa)). The tract at residues 403–428 (SGGTGLETPDRKGKGAAEGKPSSLFP) is disordered. Basic and acidic residues predominate over residues 410–419 (TPDRKGKGAA). Asn469 carries an N-linked (GlcNAc...) asparagine glycan. The disordered stretch occupies residues 509–528 (ARSLEGPQRQSRGPVPPSSH). EGF-like domains lie at 564–595 (SVDN…PDCG), 596–626 (RASC…AECD), 628–660 (PTNQ…ESCE), 661–692 (EVDC…TNCE), 694–727 (PRAT…HDCS), 728–759 (IEIC…ACDQ), 760–789 (RACH…EHCT), and 790–833 (IAHY…TGCD). 22 disulfides stabilise this stretch: Cys568–Cys578, Cys572–Cys583, Cys585–Cys594, Cys603–Cys614, Cys616–Cys625, Cys632–Cys643, Cys637–Cys648, Cys650–Cys659, Cys664–Cys675, Cys669–Cys680, Cys682–Cys691, Cys702–Cys715, Cys717–Cys726, Cys731–Cys741, Cys735–Cys746, Cys748–Cys757, Cys762–Cys772, Cys766–Cys777, Cys779–Cys788, Cys802–Cys812, Cys806–Cys821, and Cys823–Cys832. 2 N-linked (GlcNAc...) asparagine glycosylation sites follow: Asn942 and Asn1261. NHL repeat units lie at residues 1218–1261 (SCPS…PSGN), 1266–1310 (LEMR…VKST), 1336–1380 (TRCG…NGII), 1395–1446 (LSCD…VAGR), and 1525–1568 (CFSG…IRKN). Residues 1578–1597 (YELSSPIDQELYLFDTSGKH) form a YD 1 repeat. A glycan (N-linked (GlcNAc...) asparagine) is linked at Asn1611. YD repeat units follow at residues 1614-1634 (YTGD…VNVR), 1677-1696 (YHGN…WTTF), and 1697-1719 (YEYD…SSFR). N-linked (GlcNAc...) asparagine glycans are attached at residues Asn1707, Asn1743, Asn1801, and Asn1886. YD repeat units lie at residues 1889-1908 (YSPG…ERME), 1930-1948 (YLEK…YIFE), 1949-1969 (FDKN…QTLE), 1976-1993 (YYRN…VIQD), 1994-2015 (FTED…VIYK), 2016-2033 (YGKL…TKVS), 2036-2056 (YDET…FTCT), 2059-2079 (YRQI…EGMV), 2087-2106 (YDNS…TPLP), 2112-2129 (YDDV…GVIY), 2130-2156 (YDIN…MKEV), 2158-2171 (YEIF…MTVQ), 2172-2195 (YDNM…TRYS), 2198-2218 (YDAD…WRYS), 2219-2239 (YDLN…LTPL), 2241-2261 (YDLR…DEDG), 2273-2293 (YNSA…SVRY), and 2295-2315 (YDGL…LQFF). A glycan (N-linked (GlcNAc...) asparagine) is linked at Asn1987. Asn2190 carries N-linked (GlcNAc...) asparagine glycosylation. Residue Asn2330 is glycosylated (N-linked (GlcNAc...) asparagine). The YD 23 repeat unit spans residues 2341–2382 (YDLQGHLFAMELSSGDEFYIACDNIGTPLAVFSGTGLMIKQI). An N-linked (GlcNAc...) asparagine glycan is attached at Asn2648.

It belongs to the tenascin family. Teneurin subfamily. Homodimer; disulfide-linked. May also form heterodimer with either TENM1 or TENM2 or TENM3. In terms of tissue distribution, expressed in brain and spinal cord (at protein level). Expressed in neurons and oligodendrocytes of the spinal cord. Expressed weakly in kidney, lung and spleen. Expressed in the cortex, CA1, CA2 and CA3 of the hippocampus. Expressed in the white matter, Purkinje cells and molecular layer of the cerebellum.

The protein localises to the cell membrane. Its subcellular location is the cell projection. The protein resides in the nucleus. It localises to the cytoplasm. Involved in neural development, regulating the establishment of proper connectivity within the nervous system. Plays a role in the establishment of the anterior-posterior axis during gastrulation. Regulates the differentiation and cellular process formation of oligodendrocytes and myelination of small-diameter axons in the central nervous system (CNS). Promotes activation of focal adhesion kinase. May function as a cellular signal transducer. In Mus musculus (Mouse), this protein is Teneurin-4 (Tenm4).